Reading from the N-terminus, the 656-residue chain is Ribosome quality control complex subunit 1 (656 aa).

Basic residues predominate over residues M1–R11. 3 disordered regions span residues M1–T35, N51–S122, and L634–D656. Residues L17 to F32 show a composition bias toward acidic residues. Positions N51 to S63 are enriched in basic and acidic residues. Phosphoserine occurs at positions 56, 61, and 63. Over residues K83–T101 the composition is skewed to basic residues. The segment covering G102–S122 has biased composition (basic and acidic residues). 2 positions are modified to phosphoserine: S110 and S111.

Belongs to the TCF25 family. As to quaternary structure, component of the ribosome quality control complex (RQC), composed of the E3 ubiquitin ligase rkr1/ltn1, rqc1 and mtr1/rqc2, as well as cdc48 and its ubiquitin-binding cofactors. RQC forms a stable complex with 60S ribosomal subunits.

It is found in the cytoplasm. Functionally, component of the ribosome quality control complex (RQC), a ribosome-associated complex that mediates ubiquitination and extraction of incompletely synthesized nascent chains for proteasomal degradation. Within the RQC complex, rqc1 is essential for the recruitment of cdc48 to incompletely synthesized nascent polypeptides that are ubiquitinated by rkr1/ltn1. This chain is Ribosome quality control complex subunit 1, found in Schizosaccharomyces pombe (strain 972 / ATCC 24843) (Fission yeast).